A 409-amino-acid polypeptide reads, in one-letter code: Histidine--tRNA ligase (409 aa).

The protein belongs to the class-II aminoacyl-tRNA synthetase family.

The protein resides in the cytoplasm. It catalyses the reaction tRNA(His) + L-histidine + ATP = L-histidyl-tRNA(His) + AMP + diphosphate + H(+). This Archaeoglobus fulgidus (strain ATCC 49558 / DSM 4304 / JCM 9628 / NBRC 100126 / VC-16) protein is Histidine--tRNA ligase (hisS).